The sequence spans 138 residues: MNIIDHFEQENISKLTANKKIPDFEAGDTVKVTVKIIDRSIEKDGKEKLTERFQAYEGVVIAKRNRGITSSFLVRKISHGEGVERRFMTYSPIVHSIDVVKYGVVRRAKLYYLRQRSGKSARIKERHIPIAKTKAAKA.

The protein belongs to the bacterial ribosomal protein bL19 family.

In terms of biological role, this protein is located at the 30S-50S ribosomal subunit interface and may play a role in the structure and function of the aminoacyl-tRNA binding site. This Rickettsia felis (strain ATCC VR-1525 / URRWXCal2) (Rickettsia azadi) protein is Large ribosomal subunit protein bL19.